The primary structure comprises 379 residues: UDP-N-acetylglucosamine--N-acetylmuramyl-(pentapeptide) pyrophosphoryl-undecaprenol N-acetylglucosamine transferase (379 aa).

Residues 19-21, asparagine 133, arginine 174, serine 207, isoleucine 261, and glutamine 306 each bind UDP-N-acetyl-alpha-D-glucosamine; that span reads TGG.

Belongs to the glycosyltransferase 28 family. MurG subfamily.

It localises to the cell inner membrane. It carries out the reaction di-trans,octa-cis-undecaprenyl diphospho-N-acetyl-alpha-D-muramoyl-L-alanyl-D-glutamyl-meso-2,6-diaminopimeloyl-D-alanyl-D-alanine + UDP-N-acetyl-alpha-D-glucosamine = di-trans,octa-cis-undecaprenyl diphospho-[N-acetyl-alpha-D-glucosaminyl-(1-&gt;4)]-N-acetyl-alpha-D-muramoyl-L-alanyl-D-glutamyl-meso-2,6-diaminopimeloyl-D-alanyl-D-alanine + UDP + H(+). The protein operates within cell wall biogenesis; peptidoglycan biosynthesis. Functionally, cell wall formation. Catalyzes the transfer of a GlcNAc subunit on undecaprenyl-pyrophosphoryl-MurNAc-pentapeptide (lipid intermediate I) to form undecaprenyl-pyrophosphoryl-MurNAc-(pentapeptide)GlcNAc (lipid intermediate II). This is UDP-N-acetylglucosamine--N-acetylmuramyl-(pentapeptide) pyrophosphoryl-undecaprenol N-acetylglucosamine transferase from Porphyromonas gingivalis (strain ATCC BAA-308 / W83).